We begin with the raw amino-acid sequence, 58 residues long: Small ribosomal subunit protein bS21 (58 aa).

The interval 36 to 58 (EHYEKPSVKRKKKSEAARRRKYR) is disordered. Positions 43–58 (VKRKKKSEAARRRKYR) are enriched in basic residues.

The protein belongs to the bacterial ribosomal protein bS21 family.

This Symbiobacterium thermophilum (strain DSM 24528 / JCM 14929 / IAM 14863 / T) protein is Small ribosomal subunit protein bS21.